The chain runs to 874 residues: Probable inorganic carbon transporter subunit DabA (874 aa).

The Zn(2+) site is built by Cys398, Asp400, His580, and Cys595.

It belongs to the inorganic carbon transporter (TC 9.A.2) DabA family. Forms a complex with DabB. Requires Zn(2+) as cofactor.

Its subcellular location is the cell membrane. Functionally, part of an energy-coupled inorganic carbon pump. This is Probable inorganic carbon transporter subunit DabA from Bacillus anthracis (strain A0248).